The following is a 257-amino-acid chain: (R)-2-haloacid dehalogenase (257 aa).

This sequence belongs to the HAD-like hydrolase superfamily. S-2-haloalkanoic acid dehalogenase family.

The enzyme catalyses an (R)-2-haloacid + H2O = a (2S)-2-hydroxycarboxylate + a halide anion + H(+). Its function is as follows. Catalyzes the hydrolytic dehalogenation of small (R)-2-haloalkanoic acids to yield the corresponding (S)-2-hydroxyalkanoic acids. Acts on acids of short chain lengths, C(2) to C(4), with inversion of configuration at C-2. The protein is (R)-2-haloacid dehalogenase (dehI) of Rhizobium sp. (strain NHG3).